A 148-amino-acid polypeptide reads, in one-letter code: Large ribosomal subunit protein bL9 (148 aa).

Belongs to the bacterial ribosomal protein bL9 family.

Its function is as follows. Binds to the 23S rRNA. This is Large ribosomal subunit protein bL9 from Hydrogenobaculum sp. (strain Y04AAS1).